The sequence spans 240 residues: Peptidyl-tRNA hydrolase (240 aa).

Position 14 (Tyr-14) interacts with tRNA. Catalysis depends on His-19, which acts as the Proton acceptor. Residues Phe-64, Asn-66, and Asn-112 each contribute to the tRNA site. The disordered stretch occupies residues 196–227; that stretch reads EKPAQKQQPKQQSHIRQARSQQAPAKLPETGP. Residues 209–218 show a composition bias toward polar residues; that stretch reads HIRQARSQQA.

The protein belongs to the PTH family. Monomer.

It localises to the cytoplasm. It carries out the reaction an N-acyl-L-alpha-aminoacyl-tRNA + H2O = an N-acyl-L-amino acid + a tRNA + H(+). Its function is as follows. Hydrolyzes ribosome-free peptidyl-tRNAs (with 1 or more amino acids incorporated), which drop off the ribosome during protein synthesis, or as a result of ribosome stalling. Catalyzes the release of premature peptidyl moieties from peptidyl-tRNA molecules trapped in stalled 50S ribosomal subunits, and thus maintains levels of free tRNAs and 50S ribosomes. The polypeptide is Peptidyl-tRNA hydrolase (Mesorhizobium japonicum (strain LMG 29417 / CECT 9101 / MAFF 303099) (Mesorhizobium loti (strain MAFF 303099))).